The following is a 420-amino-acid chain: MFTRDMQIAGFDDALWDAMQQEVGRQEAHIELIASENYASPRVMQAQGTQLTNKYAEGYPGKRYYGGCEHVDVVEDLAIQYAKELFGATYANVQPHSGSQANGAVFQALVKPGDTVLGMSLDAGGHLTHGAKPNFSGKHYNAVQYGLDENGLIDYDEVARLAREHQPKMIIAGFSAYSQVIDWARFREIADDVGAFLLVDMAHIAGLVAAGVYPSPLPHAHVVTTTTHKTLRGPRGGLILSAENNAEIEKKFQSAVFPGSQGGPLMHVIAAKAICFKEAMEPDFKAYQQQVIDNAKAMAGVFIERGYDVVSGGTEDHLFLLSLVKQGLTGKDADAALGRAHITVNKNAVPNDPQSPFVTSGLRIGTPAVTTRGFGESECADLAGWICDILDAMQQGDASQAEADVKAKVEAVCARLPVYR.

(6S)-5,6,7,8-tetrahydrofolate is bound by residues Leu-121 and 125–127 (GHL). Residue Lys-229 is modified to N6-(pyridoxal phosphate)lysine. 355–357 (SPF) provides a ligand contact to (6S)-5,6,7,8-tetrahydrofolate.

It belongs to the SHMT family. Homodimer. Pyridoxal 5'-phosphate is required as a cofactor.

Its subcellular location is the cytoplasm. The enzyme catalyses (6R)-5,10-methylene-5,6,7,8-tetrahydrofolate + glycine + H2O = (6S)-5,6,7,8-tetrahydrofolate + L-serine. Its pathway is one-carbon metabolism; tetrahydrofolate interconversion. It functions in the pathway amino-acid biosynthesis; glycine biosynthesis; glycine from L-serine: step 1/1. In terms of biological role, catalyzes the reversible interconversion of serine and glycine with tetrahydrofolate (THF) serving as the one-carbon carrier. This reaction serves as the major source of one-carbon groups required for the biosynthesis of purines, thymidylate, methionine, and other important biomolecules. Also exhibits THF-independent aldolase activity toward beta-hydroxyamino acids, producing glycine and aldehydes, via a retro-aldol mechanism. This chain is Serine hydroxymethyltransferase, found in Chromohalobacter salexigens (strain ATCC BAA-138 / DSM 3043 / CIP 106854 / NCIMB 13768 / 1H11).